The chain runs to 122 residues: Ribosome-binding factor A (122 aa).

Belongs to the RbfA family. Monomer. Binds 30S ribosomal subunits, but not 50S ribosomal subunits or 70S ribosomes.

It localises to the cytoplasm. In terms of biological role, one of several proteins that assist in the late maturation steps of the functional core of the 30S ribosomal subunit. Associates with free 30S ribosomal subunits (but not with 30S subunits that are part of 70S ribosomes or polysomes). Required for efficient processing of 16S rRNA. May interact with the 5'-terminal helix region of 16S rRNA. This Halothermothrix orenii (strain H 168 / OCM 544 / DSM 9562) protein is Ribosome-binding factor A.